The primary structure comprises 72 residues: NAD(P)H-quinone oxidoreductase subunit O (72 aa).

The protein belongs to the complex I NdhO subunit family. NDH-1 can be composed of about 15 different subunits; different subcomplexes with different compositions have been identified which probably have different functions.

It is found in the cellular thylakoid membrane. It catalyses the reaction a plastoquinone + NADH + (n+1) H(+)(in) = a plastoquinol + NAD(+) + n H(+)(out). It carries out the reaction a plastoquinone + NADPH + (n+1) H(+)(in) = a plastoquinol + NADP(+) + n H(+)(out). In terms of biological role, NDH-1 shuttles electrons from an unknown electron donor, via FMN and iron-sulfur (Fe-S) centers, to quinones in the respiratory and/or the photosynthetic chain. The immediate electron acceptor for the enzyme in this species is believed to be plastoquinone. Couples the redox reaction to proton translocation, and thus conserves the redox energy in a proton gradient. Cyanobacterial NDH-1 also plays a role in inorganic carbon-concentration. The protein is NAD(P)H-quinone oxidoreductase subunit O of Crocosphaera subtropica (strain ATCC 51142 / BH68) (Cyanothece sp. (strain ATCC 51142)).